A 750-amino-acid chain; its full sequence is Methylmalonyl-CoA mutase, mitochondrial (750 aa).

A mitochondrion-targeting transit peptide spans 1-32; the sequence is MLRAKNQLFLLSPHYLKQVKESSGSRLIQQRL. Gln-50 serves as a coordination point for malonyl-CoA. Lys-89 carries the post-translational modification N6-acetyllysine. Malonyl-CoA contacts are provided by residues 96–99 and 106–110; these read YPTM and TIRQY. Position 212 is an N6-acetyllysine (Lys-212). Malonyl-CoA-binding positions include 216–218, Arg-228, Lys-255, His-265, and 304–306; these read TIQ and RLS. At Lys-335 the chain carries N6-acetyllysine. Lys-343 carries the post-translational modification N6-succinyllysine. Ser-481 bears the Phosphoserine mark. Lys-595 bears the N6-succinyllysine mark. Lys-602 carries the N6-acetyllysine modification. The region spanning 614–746 is the B12-binding domain; it reads RPRLLVAKMG…DDIEKCLEKK (133 aa). Adenosylcob(III)alamin is bound at residue His-627.

The protein belongs to the methylmalonyl-CoA mutase family. In terms of assembly, homodimer. Interacts (the apoenzyme form) with MMAA; the interaction is GTP dependent. The cofactor is adenosylcob(III)alamin.

Its subcellular location is the mitochondrion matrix. The protein resides in the mitochondrion. It is found in the cytoplasm. The enzyme catalyses (R)-methylmalonyl-CoA = succinyl-CoA. Its activity is regulated as follows. Inhibited by itaconyl-CoA, a metabolite that inactivates the coenzyme B12 cofactor. Its function is as follows. Catalyzes the reversible isomerization of methylmalonyl-CoA (MMCoA) (generated from branched-chain amino acid metabolism and degradation of dietary odd chain fatty acids and cholesterol) to succinyl-CoA (3-carboxypropionyl-CoA), a key intermediate of the tricarboxylic acid cycle. The protein is Methylmalonyl-CoA mutase, mitochondrial (MMUT) of Pongo abelii (Sumatran orangutan).